Reading from the N-terminus, the 309-residue chain is Calponin-2 (309 aa).

Ser2 bears the N-acetylserine mark. An N6-acetyllysine mark is found at Lys8 and Lys25. Residues 28–132 (PQKEAELRSW…SLLALAGKAK (105 aa)) enclose the Calponin-homology (CH) domain. At Ser138 the chain carries Phosphoserine. Calponin-like repeat units follow at residues 166–191 (IGLQMGTNKCASQSGMTAYGTRRHLY), 206–231 (ISLQMGTNKCASQVGMTAPGTRRHIY), and 245–269 (MSLQMGYTQGANQSGQVFGLGRQIY). A disordered region spans residues 273-309 (YCPQGPAADGAPAAAGDGPGPGEPSECPPYYQEEAGY). Low complexity predominate over residues 277 to 288 (GPAADGAPAAAG).

It belongs to the calponin family.

In terms of biological role, thin filament-associated protein that is implicated in the regulation and modulation of smooth muscle contraction. It is capable of binding to actin, calmodulin and tropomyosin. The interaction of calponin with actin inhibits the actomyosin Mg-ATPase activity. This chain is Calponin-2 (CNN2), found in Bos taurus (Bovine).